The primary structure comprises 87 residues: CRISPR-associated endoribonuclease Cas2 (87 aa).

Asp8 contributes to the Mg(2+) binding site.

Belongs to the CRISPR-associated endoribonuclease Cas2 protein family. Homodimer, forms a heterotetramer with a Cas1 homodimer. Mg(2+) serves as cofactor.

In terms of biological role, CRISPR (clustered regularly interspaced short palindromic repeat), is an adaptive immune system that provides protection against mobile genetic elements (viruses, transposable elements and conjugative plasmids). CRISPR clusters contain sequences complementary to antecedent mobile elements and target invading nucleic acids. CRISPR clusters are transcribed and processed into CRISPR RNA (crRNA). Functions as a ssRNA-specific endoribonuclease. Involved in the integration of spacer DNA into the CRISPR cassette. This Methanosarcina acetivorans (strain ATCC 35395 / DSM 2834 / JCM 12185 / C2A) protein is CRISPR-associated endoribonuclease Cas2.